The chain runs to 202 residues: Small ribosomal subunit protein uS4 (202 aa).

The interval 22 to 43 (TRKNARRAYPPGQHGQNRRKRS) is disordered. In terms of domain architecture, S4 RNA-binding spans 90–152 (MRLDNTVFRL…DKSRKLVQAN (63 aa)).

The protein belongs to the universal ribosomal protein uS4 family. In terms of assembly, part of the 30S ribosomal subunit. Contacts protein S5. The interaction surface between S4 and S5 is involved in control of translational fidelity.

Its function is as follows. One of the primary rRNA binding proteins, it binds directly to 16S rRNA where it nucleates assembly of the body of the 30S subunit. With S5 and S12 plays an important role in translational accuracy. This is Small ribosomal subunit protein uS4 from Gloeothece citriformis (strain PCC 7424) (Cyanothece sp. (strain PCC 7424)).